The chain runs to 343 residues: Galactoside alpha-(1,2)-fucosyltransferase 2 (343 aa).

The Cytoplasmic portion of the chain corresponds to 1–14 (MLVVQMPFSFPMAH). A helical; Signal-anchor for type II membrane protein transmembrane segment spans residues 15–28 (FILFVFTVSTIFHV). The Lumenal segment spans residues 29–343 (QQRLAKIQAM…AADLSPLLKH (315 aa)). N-linked (GlcNAc...) asparagine glycans are attached at residues Asn188, Asn282, and Asn308.

The protein belongs to the glycosyltransferase 11 family.

The protein resides in the golgi apparatus. The protein localises to the golgi stack membrane. It catalyses the reaction a beta-D-galactosyl-(1-&gt;3)-N-acetyl-beta-D-glucosaminyl derivative + GDP-beta-L-fucose = an alpha-L-Fuc-(1-&gt;2)-beta-D-Gal-(1-&gt;3)-beta-D-GlcNAc derivative + GDP + H(+). It carries out the reaction a beta-D-galactosyl-(1-&gt;4)-N-acetyl-beta-D-glucosaminyl derivative + GDP-beta-L-fucose = an alpha-L-Fuc-(1-&gt;2)-beta-D-Gal-(1-&gt;4)-beta-D-GlcNAc derivative + GDP + H(+). The catalysed reaction is a neolactoside nLc4Cer + GDP-beta-L-fucose = a neolactoside IV(2)-alpha-Fuc-nLc4Cer + GDP + H(+). The enzyme catalyses a neolactoside nLc4Cer(d18:1(4E)) + GDP-beta-L-fucose = a neolactoside IV(2)-alpha-Fuc-nLc4Cer(d18:1(4E)) + GDP + H(+). It catalyses the reaction a ganglioside GM1 + GDP-beta-L-fucose = a ganglioside Fuc-GM1 + GDP + H(+). It carries out the reaction a ganglioside GA1 + GDP-beta-L-fucose = a ganglioside Fuc-GA1 + GDP + H(+). The catalysed reaction is Lc4Cer + GDP-beta-L-fucose = alpha-L-fucosyl-(1-&gt;2)-beta-D-galactosyl-(1-&gt;3)-N-acetyl-beta-D-glucosaminyl-(1-&gt;3)-beta-D-galactosyl-(1-&gt;4)-beta-D-glucosyl-(1&lt;-&gt;1')-ceramide + GDP + H(+). The enzyme catalyses a beta-D-Gal-(1-&gt;3)-beta-D-GlcNAc-(1-&gt;3)-beta-D-Gal-(1-&gt;4)-beta-D-Glc-(1&lt;-&gt;1')-Cer(d18:1(4E)) + GDP-beta-L-fucose = alpha-L-fucosyl-(1-&gt;2)- beta-D-galactosyl-(1-&gt;3)-N-acetyl-beta-D-glucosaminyl-(1-&gt;3)-beta-D-galactosyl-(1-&gt;4)-beta-D-glucosyl-(1&lt;-&gt;1')-N-acylsphing-4-enine + GDP + H(+). It catalyses the reaction a ganglioside GD1b + GDP-beta-L-fucose = a ganglioside Fuc-GD1b + GDP + H(+). It carries out the reaction a ganglioside GM1 (d18:1(4E)) + GDP-beta-L-fucose = a ganglioside Fuc-GM1 (d18:1(4E)) + GDP + H(+). The catalysed reaction is a globoside GalGb4Cer (d18:1(4E)) + GDP-beta-L-fucose = a globoside Globo-H (d18:1(4E)) + GDP + H(+). The enzyme catalyses a lactoside III(4)-a-Fuc-Lc4Cer + GDP-beta-L-fucose = a lactoside IV(2),III(4)-a-[Fuc]2-Lc4Cer + GDP + H(+). It catalyses the reaction beta-D-galactosyl-(1-&gt;3)-N-acetyl-D-galactosamine + GDP-beta-L-fucose = alpha-L-fucosyl-(1-&gt;2)-beta-D-galactosyl-(1-&gt;3)-N-acetyl-D-galactosamine + GDP + H(+). The protein operates within protein modification; protein glycosylation. Catalyzes the transfer of L-fucose, from a guanosine diphosphate-beta-L-fucose, to the terminal galactose on both O- and N-linked glycans chains of cell surface glycoproteins and glycolipids and the resulting epitope regulates several processes such as cell-cell interaction including host-microbe interaction, cell surface expression and cell proliferation. Preferentially fucosylates gangliosides GA1 and GM1 in the antrum, cecum and colon and in the female reproductive organs. Fucosylated host glycoproteins or glycolipids mediate interaction with intestinal microbiota influencing its composition. Creates a soluble precursor oligosaccharide FuC-alpha ((1,2)Galbeta-) called the H antigen which is an essential substrate for the final step in the soluble ABO blood group antigen synthesis pathway. The protein is Galactoside alpha-(1,2)-fucosyltransferase 2 of Hylobates lar (Lar gibbon).